The sequence spans 223 residues: Ubiquitin carboxyl-terminal hydrolase isozyme L1 (223 aa).

Met1 carries the post-translational modification N-acetylmethionine. The UCH catalytic domain maps to Gln2–Lys221. The interval Pro5–Pro10 is interaction with ubiquitin. Cys90 acts as the Nucleophile in catalysis. Ser125 carries the phosphoserine modification. Residue His161 is the Proton donor of the active site. The interval Glu211–Ala216 is interaction with ubiquitin. Cys220 carries S-farnesyl cysteine lipidation. Positions Lys221–Ala223 are cleaved as a propeptide — removed in mature form.

This sequence belongs to the peptidase C12 family. Monomer. Homodimer. Interacts with COPS5 and SNCA. In terms of processing, O-glycosylated.

Its subcellular location is the cytoplasm. It is found in the endoplasmic reticulum membrane. The catalysed reaction is Thiol-dependent hydrolysis of ester, thioester, amide, peptide and isopeptide bonds formed by the C-terminal Gly of ubiquitin (a 76-residue protein attached to proteins as an intracellular targeting signal).. In terms of biological role, ubiquitin-protein hydrolase involved both in the processing of ubiquitin precursors and of ubiquitinated proteins. This enzyme is a thiol protease that recognizes and hydrolyzes a peptide bond at the C-terminal glycine of ubiquitin. Also binds to free monoubiquitin and may prevent its degradation in lysosomes. The homodimer may have ATP-independent ubiquitin ligase activity. The sequence is that of Ubiquitin carboxyl-terminal hydrolase isozyme L1 (UCHL1) from Equus caballus (Horse).